The following is a 218-amino-acid chain: MAEISRIQYEMEYTEGISQRMRVPEKLKVAPPNADLEQGFQEGVPNASVIMQVPERIVVAGNNEDVSFSRPADLDLIQSTPFKSLALKTPPRVLTLSERPLDFLDLERPPTTPQNEEIRAVGRVKRERSMSENAVRQNGQLVRNDSLYGISNIDTTTEGTSDDLTVVDAASLRRQIIKLNRRLQLLEEENKERAKREMVMYSITVAFWLLNSWLWFRR.

Residues methionine 1–methionine 198 are Cytoplasmic-facing. Threonine 89 carries the post-translational modification Phosphothreonine. 4 positions are modified to phosphoserine: serine 129, serine 131, serine 146, and serine 171. Residues valine 167–methionine 198 are a coiled coil. Residues valine 199–phenylalanine 216 form a helical; Anchor for type IV membrane protein membrane-spanning segment. At arginine 217 to arginine 218 the chain is on the mitochondrial intermembrane side.

This sequence belongs to the Tango11 family. In terms of assembly, homodimer. Interacts with DNM1L. Interacts with C11orf65/MFI; the interaction inhibits MFF interaction with DNM1L.

It localises to the mitochondrion outer membrane. It is found in the peroxisome. Its subcellular location is the cytoplasmic vesicle. The protein localises to the secretory vesicle. The protein resides in the synaptic vesicle. Functionally, plays a role in mitochondrial and peroxisomal fission. Promotes the recruitment and association of the fission mediator dynamin-related protein 1 (DNM1L) to the mitochondrial surface. May be involved in regulation of synaptic vesicle membrane dynamics by recruitment of DNM1L to clathrin-containing vesicles. The sequence is that of Mitochondrial fission factor (MFF) from Pongo abelii (Sumatran orangutan).